Reading from the N-terminus, the 249-residue chain is Vacuolar iron transporter homolog 3 (249 aa).

Positions 1–32 are disordered; that stretch reads MAMQMNSVVHVSTSPSPSPATSPPPEGKQEHG. Topologically, residues 1 to 74 are cytoplasmic; sequence MAMQMNSVVH…SGRAQWLRAA (74 aa). The segment covering 16 to 26 has biased composition (pro residues); that stretch reads SPSPATSPPPE. A helical membrane pass occupies residues 75 to 95; it reads VLGANDGLVSVASLMIGVGAV. Topologically, residues 96 to 102 are vacuolar; it reads SESGRAM. A helical membrane pass occupies residues 103–123; that stretch reads LVSGVAGLVAGACSMAIGEFV. Topologically, residues 124 to 166 are cytoplasmic; the sequence is SVYAQYDIEVAAARRRRRQRRRRCDGDGEEEGSGRLPSPFKAA. The chain crosses the membrane as a helical span at residues 167 to 187; the sequence is AASALAFTVGALLPLLAGGFV. At 188–193 the chain is on the vacuolar side; it reads RPWAPR. A helical transmembrane segment spans residues 194–214; sequence VAAVCAATSAALAGFGALGAA. The Cytoplasmic segment spans residues 215 to 226; the sequence is LGGASPARSAAR. Residues 227-247 form a helical membrane-spanning segment; that stretch reads VLLGGWAAMAACYGVLRLFAN. Residues 248-249 lie on the Vacuolar side of the membrane; it reads LY.

The protein belongs to the CCC1 family.

It is found in the vacuole membrane. The enzyme catalyses Fe(2+)(in) = Fe(2+)(out). Probable vacuolar iron transporter that may be involved in the regulation of iron distribution throughout the plant. This Oryza sativa subsp. japonica (Rice) protein is Vacuolar iron transporter homolog 3.